The chain runs to 615 residues: MSAEKQTHGFQAEVSRLLHLMIHSLYSNREIFLRELISNASDACDKLRFEALDNPALLEQGGEPQITLRVDKDAGTLTIADNGIGMSENEVVDNLGTIARSGTEKFLANLSGDQKKDAQLIGQFGVGFYSAFIVAETVTVETRKAGEAVNNGVRWESDGKGEFTVETVPRDEQGTAVILHLRDDAKDFLDDFKIRQVIGQYSDHVAFPIVLETPQEGDKDTKTETLNSATALWQRPRSEVTDEEYQSFYKHISHDFQDALTWSHNKVEGKLEYTSLLYVPAQAPFDLYQREANRGLKLYVQRVFIMDDAEQFLPQYLRFIKGVIDAPDLPLNVSRELLQDYGPVQKIRSALTKRVLQMLKKLSNDDKQYAKFWAQFGSVIKEGVAEDRDNQQSIAALLRFATSKTPDSVSTSLDQYLESKPADQDCIYYLLADTPSAARQSPHLEVFRKKGIEVLLLSDPVDEWMVGYLESYKEVKLVNAARGELDLGDESEQANNDDPLIQRLAASLTEQVEAVRATTRLVDSPACLVLAEDQLGPQMRRMLEAAGQPVPENKPVLEVNLDHTLLQALTRIEEDEKFNDFAALLLDQAMLAEGQLPKDPAATARRMQALLSQSV.

Residues 1–335 are a; substrate-binding; sequence MSAEKQTHGF…APDLPLNVSR (335 aa). Positions 336–541 are b; that stretch reads ELLQDYGPVQ…EDQLGPQMRR (206 aa). Positions 542 to 615 are c; it reads MLEAAGQPVP…RMQALLSQSV (74 aa).

The protein belongs to the heat shock protein 90 family. As to quaternary structure, homodimer.

It is found in the cytoplasm. Molecular chaperone. Has ATPase activity. This Alcanivorax borkumensis (strain ATCC 700651 / DSM 11573 / NCIMB 13689 / SK2) protein is Chaperone protein HtpG.